Here is a 752-residue protein sequence, read N- to C-terminus: Polyribonucleotide nucleotidyltransferase (752 aa).

Residues Asp542 and Asp548 each coordinate Mg(2+). Residues 608-667 (PRITTIQIPVSKIGELIGPKGKNINALTEETGANISIEDDGTVFISAASGEAAEAAIEKI) enclose the KH domain. In terms of domain architecture, S1 motif spans 679-748 (GERFLGTVVK…NRGKISLVPV (70 aa)).

The protein belongs to the polyribonucleotide nucleotidyltransferase family. Mg(2+) serves as cofactor.

It is found in the cytoplasm. It catalyses the reaction RNA(n+1) + phosphate = RNA(n) + a ribonucleoside 5'-diphosphate. Functionally, involved in mRNA degradation. Catalyzes the phosphorolysis of single-stranded polyribonucleotides processively in the 3'- to 5'-direction. The chain is Polyribonucleotide nucleotidyltransferase from Corynebacterium efficiens (strain DSM 44549 / YS-314 / AJ 12310 / JCM 11189 / NBRC 100395).